Reading from the N-terminus, the 235-residue chain is Pyridoxine 5'-phosphate synthase (235 aa).

Position 6 (N6) interacts with 3-amino-2-oxopropyl phosphate. Position 8–9 (8–9) interacts with 1-deoxy-D-xylulose 5-phosphate; it reads DH. R17 is a binding site for 3-amino-2-oxopropyl phosphate. The active-site Proton acceptor is H42. Residues R44 and H49 each contribute to the 1-deoxy-D-xylulose 5-phosphate site. The active-site Proton acceptor is the E69. Residue T99 coordinates 1-deoxy-D-xylulose 5-phosphate. H189 functions as the Proton donor in the catalytic mechanism. 3-amino-2-oxopropyl phosphate contacts are provided by residues G190 and 211–212; that span reads GH.

Belongs to the PNP synthase family. Homooctamer; tetramer of dimers.

Its subcellular location is the cytoplasm. It carries out the reaction 3-amino-2-oxopropyl phosphate + 1-deoxy-D-xylulose 5-phosphate = pyridoxine 5'-phosphate + phosphate + 2 H2O + H(+). Its pathway is cofactor biosynthesis; pyridoxine 5'-phosphate biosynthesis; pyridoxine 5'-phosphate from D-erythrose 4-phosphate: step 5/5. Its function is as follows. Catalyzes the complicated ring closure reaction between the two acyclic compounds 1-deoxy-D-xylulose-5-phosphate (DXP) and 3-amino-2-oxopropyl phosphate (1-amino-acetone-3-phosphate or AAP) to form pyridoxine 5'-phosphate (PNP) and inorganic phosphate. This chain is Pyridoxine 5'-phosphate synthase, found in Chlorobium chlorochromatii (strain CaD3).